Reading from the N-terminus, the 264-residue chain is S-adenosylmethionine decarboxylase proenzyme (264 aa).

Ser112 (schiff-base intermediate with substrate; via pyruvic acid) is an active-site residue. Ser112 carries the post-translational modification Pyruvic acid (Ser); by autocatalysis. The active-site Proton acceptor; for processing activity is His117. The active-site Proton donor; for catalytic activity is the Cys140.

The protein belongs to the prokaryotic AdoMetDC family. Type 2 subfamily. As to quaternary structure, heterooctamer of four alpha and four beta chains arranged as a tetramer of alpha/beta heterodimers. Requires pyruvate as cofactor. In terms of processing, is synthesized initially as an inactive proenzyme. Formation of the active enzyme involves a self-maturation process in which the active site pyruvoyl group is generated from an internal serine residue via an autocatalytic post-translational modification. Two non-identical subunits are generated from the proenzyme in this reaction, and the pyruvate is formed at the N-terminus of the alpha chain, which is derived from the carboxyl end of the proenzyme. The post-translation cleavage follows an unusual pathway, termed non-hydrolytic serinolysis, in which the side chain hydroxyl group of the serine supplies its oxygen atom to form the C-terminus of the beta chain, while the remainder of the serine residue undergoes an oxidative deamination to produce ammonia and the pyruvoyl group blocking the N-terminus of the alpha chain.

It catalyses the reaction S-adenosyl-L-methionine + H(+) = S-adenosyl 3-(methylsulfanyl)propylamine + CO2. It participates in amine and polyamine biosynthesis; S-adenosylmethioninamine biosynthesis; S-adenosylmethioninamine from S-adenosyl-L-methionine: step 1/1. Functionally, catalyzes the decarboxylation of S-adenosylmethionine to S-adenosylmethioninamine (dcAdoMet), the propylamine donor required for the synthesis of the polyamines spermine and spermidine from the diamine putrescine. This Sodalis glossinidius (strain morsitans) protein is S-adenosylmethionine decarboxylase proenzyme.